A 447-amino-acid chain; its full sequence is GTPase Der (447 aa).

EngA-type G domains follow at residues 4–165 (QIIT…PEEE) and 180–357 (LQIV…KIWN). Residues 10 to 17 (GRPNVGKS), 57 to 61 (DTPGL), 119 to 122 (NKCE), 186 to 193 (GRPNAGKS), 233 to 237 (DTAGL), and 298 to 301 (NKWD) each bind GTP. Positions 358-443 (KKITTSKLNE…PIRFIYVKTK (86 aa)) constitute a KH-like domain.

It belongs to the TRAFAC class TrmE-Era-EngA-EngB-Septin-like GTPase superfamily. EngA (Der) GTPase family. Associates with the 50S ribosomal subunit.

Functionally, GTPase that plays an essential role in the late steps of ribosome biogenesis. The protein is GTPase Der of Rickettsia conorii (strain ATCC VR-613 / Malish 7).